Reading from the N-terminus, the 1901-residue chain is Methylcytosine dioxygenase tet3 (1901 aa).

The CXXC-type zinc-finger motif lies at 58 to 99; sequence SNKKRKRCGVCVPCLRKEPCGACYNCVNRSTSHQICKMRKCE. 8 residues coordinate Zn(2+): cysteine 65, cysteine 68, cysteine 71, cysteine 77, cysteine 80, cysteine 83, cysteine 93, and cysteine 98. 4 disordered regions span residues 434 to 455, 602 to 658, 751 to 787, and 808 to 867; these read KNAL…KKSS, WWVP…EGSA, KDQC…QNDL, and DFSL…PVSR. 2 stretches are compositionally biased toward polar residues: residues 442-455 and 602-614; these read SPRQ…KKSS and WWVP…PVSK. Positions 640-652 are enriched in basic residues; it reads KPQRKQVQIKKPK. The span at 758 to 771 shows a compositional bias: low complexity; that stretch reads STHDTSSSSGQGDS. Polar residues predominate over residues 847 to 867; that stretch reads ENSTKPATHSNPALSNNPVSR. Positions 957, 959, 1017, 1043, and 1045 each coordinate Zn(2+). Arginine 1085 is a binding site for 2-oxoglutarate. Zn(2+) contacts are provided by cysteine 1095, cysteine 1097, cysteine 1113, cysteine 1122, and cysteine 1182. A 2-oxoglutarate-binding site is contributed by cysteine 1198. Histidine 1204 contacts Zn(2+). Positions 1206 and 1208 each coordinate Fe cation. Histidine 1240 provides a ligand contact to 2-oxoglutarate. 4 disordered regions span residues 1282 to 1338, 1457 to 1501, 1591 to 1624, and 1680 to 1745; these read SEPA…QQTK, YGSE…VETT, SNAP…PGKV, and SATP…DEEI. Residues 1291 to 1325 show a composition bias toward basic and acidic residues; that stretch reads RQLEAKKAAAEKKKLQKEKLVSPDKTKQEPSDKKT. Polar residues predominate over residues 1326 to 1338; sequence CQQNPGVPQQQTK. Residues 1465–1474 are compositionally biased toward basic and acidic residues; the sequence is SFRRSSEVPH. Positions 1477–1487 are enriched in polar residues; the sequence is SLQNPSSQKSV. 2 stretches are compositionally biased toward polar residues: residues 1680–1693 and 1702–1719; these read SATP…TPCS and SFPN…SQNH. Histidine 1780 contacts Fe cation. 1795 to 1797 provides a ligand contact to 2-oxoglutarate; sequence RIS.

Belongs to the TET family. Fe(2+) serves as cofactor. Requires Zn(2+) as cofactor.

The protein resides in the nucleus. Its subcellular location is the chromosome. The enzyme catalyses a 5-methyl-2'-deoxycytidine in DNA + 2-oxoglutarate + O2 = a 5-hydroxymethyl-2'-deoxycytidine in DNA + succinate + CO2. The catalysed reaction is a 5-hydroxymethyl-2'-deoxycytidine in DNA + 2-oxoglutarate + O2 = a 5-formyl-2'-deoxycytidine in DNA + succinate + CO2 + H2O. It carries out the reaction a 5-formyl-2'-deoxycytidine in DNA + 2-oxoglutarate + O2 = a 5-carboxyl-2'-deoxycytidine in DNA + succinate + CO2 + H(+). In terms of biological role, dioxygenase that catalyzes the conversion of the modified genomic base 5-methylcytosine (5mC) into 5-hydroxymethylcytosine (5hmC) and plays a key role in epigenetic chromatin reprogramming during embryonic development. Conversion of 5mC into 5hmC probably constitutes the first step in cytosine demethylation. Selectively binds to the promoter region of target genes and contributes to regulate the expression of numerous developmental genes, including pax6, rax, sox9 and six3. May also contribute to the regulation of target genes in ways that do not require its enzyme activity. The protein is Methylcytosine dioxygenase tet3 of Xenopus tropicalis (Western clawed frog).